We begin with the raw amino-acid sequence, 421 residues long: Accessory Sec system protein translocase subunit SecY2 (421 aa).

10 consecutive transmembrane segments (helical) span residues 17–37 (LWTSLIVFIFLIGRNILIPGV), 69–89 (FALGLGPWMSATILWRVLTLI), 102–122 (TFLFKIAIAIIIGFIQSIAII), 139–159 (FGAMATISLIMVSGAVFLVWL), 165–185 (ILGIGGPTVLILASMIINWPT), 204–224 (VILMLVIMISIVFLVLLTVVV), 254–274 (PAGGMPLMYSMTLLVLPQYIL), 299–319 (PLGVTAYIIILFALSIGFAFI), 358–378 (SFVGALYMSLIAGFPLYFGII), and 383–403 (TQYALTAGSIIILVNLVINII).

It belongs to the SecY/SEC61-alpha family. SecY2 subfamily. Component of the accessory SecA2/SecY2 protein translocase complex required to export cell wall proteins. May form heterotrimers with SecE and SecG subunits.

The protein resides in the cell membrane. Its function is as follows. Part of the accessory SecA2/SecY2 system specifically required for export of possible cell wall proteins. The central subunit of a protein translocation channel. This chain is Accessory Sec system protein translocase subunit SecY2, found in Leuconostoc gelidum subsp. gasicomitatum (strain DSM 15947 / CCUG 46042 / CECT 5767 / JCM 12535 / LMG 18811 / NBRC 113245 / TB1-10) (Leuconostoc gasicomitatum).